Here is a 277-residue protein sequence, read N- to C-terminus: uncharacterized protein (277 aa).

The interval 1–20 is disordered; sequence MVTTSPPPTLTNSVQPHPTT.

This is an uncharacterized protein from Acidianus convivator (ATV).